Here is a 209-residue protein sequence, read N- to C-terminus: Large ribosomal subunit protein uL3 (209 aa).

The tract at residues 124–156 is disordered; it reads KRHNFSGGQRTHGQSDRQRAPGSVGGSSDPSRV.

The protein belongs to the universal ribosomal protein uL3 family. In terms of assembly, part of the 50S ribosomal subunit. Forms a cluster with proteins L14 and L19.

In terms of biological role, one of the primary rRNA binding proteins, it binds directly near the 3'-end of the 23S rRNA, where it nucleates assembly of the 50S subunit. This chain is Large ribosomal subunit protein uL3, found in Pelodictyon phaeoclathratiforme (strain DSM 5477 / BU-1).